The chain runs to 202 residues: Glycerol-3-phosphate acyltransferase (202 aa).

The next 4 helical transmembrane spans lie at 2-22 (ANLL…AVVV), 80-100 (LNET…LFPV), 119-139 (AIDP…AFFF), and 158-178 (VLMN…VLLI).

This sequence belongs to the PlsY family. As to quaternary structure, probably interacts with PlsX.

The protein resides in the cell inner membrane. It catalyses the reaction an acyl phosphate + sn-glycerol 3-phosphate = a 1-acyl-sn-glycero-3-phosphate + phosphate. It functions in the pathway lipid metabolism; phospholipid metabolism. Catalyzes the transfer of an acyl group from acyl-phosphate (acyl-PO(4)) to glycerol-3-phosphate (G3P) to form lysophosphatidic acid (LPA). This enzyme utilizes acyl-phosphate as fatty acyl donor, but not acyl-CoA or acyl-ACP. This is Glycerol-3-phosphate acyltransferase from Cupriavidus necator (strain ATCC 17699 / DSM 428 / KCTC 22496 / NCIMB 10442 / H16 / Stanier 337) (Ralstonia eutropha).